Consider the following 128-residue polypeptide: Large ribosomal subunit protein bL20c (128 aa).

It belongs to the bacterial ribosomal protein bL20 family.

It localises to the plastid. Binds directly to 23S ribosomal RNA and is necessary for the in vitro assembly process of the 50S ribosomal subunit. It is not involved in the protein synthesizing functions of that subunit. This is Large ribosomal subunit protein bL20c (rpl20) from Epifagus virginiana (Beechdrops).